Reading from the N-terminus, the 192-residue chain is NADH:FMN oxidoreductase (192 aa).

The segment at 1 to 20 is disordered; the sequence is MSDKPNAVSSHTTPDVPEVA. FMN-binding positions include 60-63, 77-84, Ala111, and Arg117; these read TATS and NIAETSSS.

It belongs to the non-flavoprotein flavin reductase family.

The protein localises to the cytoplasm. It catalyses the reaction FMNH2 + NAD(+) = FMN + NADH + 2 H(+). Its pathway is sulfur metabolism; dibenzothiophene degradation. Functionally, an NADH:FMN oxidoreductase which supplies reduced FMN for the '4S' desulfurization pathway that removes covalently bound sulfur from dibenzothiophene (DBT) without breaking carbon-carbon bonds. Provides DszA and DszC (DBTO2-monooxygenase and DBT-monooxygenase respectively) with reduced flavin (FMN). This chain is NADH:FMN oxidoreductase, found in Rhodococcus erythropolis (Arthrobacter picolinophilus).